The primary structure comprises 497 residues: Glycerol kinase (497 aa).

Threonine 13 provides a ligand contact to ADP. Residues threonine 13, threonine 14, and serine 15 each contribute to the ATP site. Threonine 13 contacts sn-glycerol 3-phosphate. Arginine 17 is an ADP binding site. Arginine 83, glutamate 84, and tyrosine 135 together coordinate sn-glycerol 3-phosphate. Glycerol contacts are provided by arginine 83, glutamate 84, and tyrosine 135. Histidine 231 carries the post-translational modification Phosphohistidine; by HPr. Sn-glycerol 3-phosphate is bound at residue aspartate 245. Positions 245 and 246 each coordinate glycerol. 2 residues coordinate ADP: threonine 267 and glycine 310. 4 residues coordinate ATP: threonine 267, glycine 310, glutamine 314, and glycine 411. Residues glycine 411 and asparagine 415 each contribute to the ADP site.

Belongs to the FGGY kinase family. Homotetramer and homodimer (in equilibrium). In terms of processing, the phosphoenolpyruvate-dependent sugar phosphotransferase system (PTS), including enzyme I, and histidine-containing protein (HPr) are required for the phosphorylation, which leads to the activation of the enzyme.

The enzyme catalyses glycerol + ATP = sn-glycerol 3-phosphate + ADP + H(+). Its pathway is polyol metabolism; glycerol degradation via glycerol kinase pathway; sn-glycerol 3-phosphate from glycerol: step 1/1. Its activity is regulated as follows. Activated by phosphorylation and inhibited by fructose 1,6-bisphosphate (FBP). Key enzyme in the regulation of glycerol uptake and metabolism. Catalyzes the phosphorylation of glycerol to yield sn-glycerol 3-phosphate. The sequence is that of Glycerol kinase from Listeria innocua serovar 6a (strain ATCC BAA-680 / CLIP 11262).